Consider the following 332-residue polypeptide: L-lactate dehydrogenase A chain (332 aa).

NAD(+) contacts are provided by residues 29-57 and Arg99; that span reads GMVG…MEDK. Arg106, Asn138, and Arg169 together coordinate substrate. Residue Asn138 participates in NAD(+) binding. The Proton acceptor role is filled by His193. Residue Thr248 coordinates substrate.

The protein belongs to the LDH/MDH superfamily. LDH family. As to quaternary structure, homotetramer.

It is found in the cytoplasm. It catalyses the reaction (S)-lactate + NAD(+) = pyruvate + NADH + H(+). Its pathway is fermentation; pyruvate fermentation to lactate; (S)-lactate from pyruvate: step 1/1. Interconverts simultaneously and stereospecifically pyruvate and lactate with concomitant interconversion of NADH and NAD(+). This chain is L-lactate dehydrogenase A chain (ldha), found in Rhinogobiops nicholsii (Blackeye goby).